The primary structure comprises 184 residues: MDKFLIDVIVEIPKNSKIKYEYDRQTGQIRVDRILFGSESYPQNYGFIKNTLDWDGDELDCFIFADQPFLPATVVPTRIVGALEMIDDGEIDTKLLGVIDCDPRYKEINQISDLPKHRIEEILIFLKTYKLLQKKTVIIKGLKDVCWAKKEYEICLQLMKDYGHLSKDQFIQKMQILHPEHYQK.

Substrate-binding residues include lysine 19, arginine 33, and tyrosine 45. Mg(2+) is bound by residues aspartate 55, aspartate 60, and aspartate 92. Tyrosine 129 is a binding site for substrate.

Belongs to the PPase family. As to quaternary structure, homohexamer. The cofactor is Mg(2+).

The protein localises to the cytoplasm. The catalysed reaction is diphosphate + H2O = 2 phosphate + H(+). Catalyzes the hydrolysis of inorganic pyrophosphate (PPi) forming two phosphate ions. The protein is Inorganic pyrophosphatase of Mycoplasma genitalium (strain ATCC 33530 / DSM 19775 / NCTC 10195 / G37) (Mycoplasmoides genitalium).